The chain runs to 332 residues: PTS-dependent dihydroxyacetone kinase, dihydroxyacetone-binding subunit DhaK (332 aa).

Residues 9–331 form the DhaK domain; the sequence is QPQDVVSEML…LNEDVKTISW (323 aa). Dihydroxyacetone contacts are provided by residues 55–58, K106, and D111; that span reads GSGH. The Proton acceptor role is filled by H58. H220 acts as the Tele-hemiaminal-histidine intermediate in catalysis.

As to quaternary structure, homodimer. The dihydroxyacetone kinase complex is composed of a homodimer of DhaM, a homodimer of DhaK and the subunit DhaL.

It carries out the reaction dihydroxyacetone + phosphoenolpyruvate = dihydroxyacetone phosphate + pyruvate. Its pathway is polyol metabolism; glycerol degradation. In terms of biological role, dihydroxyacetone binding subunit of the dihydroxyacetone kinase, which is responsible the phosphoenolpyruvate (PEP)-dependent phosphorylation of dihydroxyacetone via a phosphoryl group transfer from DhaL-ATP. The polypeptide is PTS-dependent dihydroxyacetone kinase, dihydroxyacetone-binding subunit DhaK (Lactococcus lactis subsp. lactis (strain IL1403) (Streptococcus lactis)).